We begin with the raw amino-acid sequence, 162 residues long: ATP synthase subunit b (162 aa).

Residues 16–36 (GISGGTIIYQLLMFIILLALL) traverse the membrane as a helical segment.

The protein belongs to the ATPase B chain family. As to quaternary structure, F-type ATPases have 2 components, F(1) - the catalytic core - and F(0) - the membrane proton channel. F(1) has five subunits: alpha(3), beta(3), gamma(1), delta(1), epsilon(1). F(0) has three main subunits: a(1), b(2) and c(10-14). The alpha and beta chains form an alternating ring which encloses part of the gamma chain. F(1) is attached to F(0) by a central stalk formed by the gamma and epsilon chains, while a peripheral stalk is formed by the delta and b chains.

It is found in the cell membrane. F(1)F(0) ATP synthase produces ATP from ADP in the presence of a proton or sodium gradient. F-type ATPases consist of two structural domains, F(1) containing the extramembraneous catalytic core and F(0) containing the membrane proton channel, linked together by a central stalk and a peripheral stalk. During catalysis, ATP synthesis in the catalytic domain of F(1) is coupled via a rotary mechanism of the central stalk subunits to proton translocation. In terms of biological role, component of the F(0) channel, it forms part of the peripheral stalk, linking F(1) to F(0). This chain is ATP synthase subunit b, found in Bacillus caldotenax.